Consider the following 509-residue polypeptide: Cruciferin CRU1 (509 aa).

An N-terminal signal peptide occupies residues 1–23; that stretch reads MVKVPHLLVATFGVLLVLNGCLA. Cys-37 and Cys-70 are oxidised to a cystine. Positions 42-271 constitute a Cupin type-1 1 domain; the sequence is LDVLQPTETI…ALKIDVRLAQ (230 aa). A phosphoserine mark is found at Ser-53 and Ser-97. Cys-113 and Cys-326 form a disulfide bridge. Thr-116 is subject to Phosphothreonine. Disordered stretches follow at residues 119 to 175, 230 to 249, and 301 to 321; these read DSQP…GFRD, RLAG…QQQN, and YESE…DNGL. Low complexity predominate over residues 124 to 172; it reads QGQQQGQPWQGQQGQQGQQGQQGQQGQQGQQGQQGQQGQQGQQGQQQQG. Positions 332–481 constitute a Cupin type-1 2 domain; the sequence is ENIDDPARAD…AFQISLEEAR (150 aa). Ser-352 carries the phosphoserine modification. A phosphothreonine mark is found at Thr-445 and Thr-487.

This sequence belongs to the 11S seed storage protein (globulins) family. Hexamer; each subunit is composed of an acidic and a basic chain derived from a single precursor and linked by a disulfide bond.

Its function is as follows. This is a seed storage protein. The protein is Cruciferin CRU1 (CRU1) of Brassica napus (Rape).